The following is a 691-amino-acid chain: Elongation factor G (691 aa).

A tr-type G domain is found at 10-284; sequence KRLRNIGIAA…AVVDYLPSPL (275 aa). Residues 19–26, 83–87, and 137–140 each bind GTP; these read AHIDAGKT, DTPGH, and NKMD.

The protein belongs to the TRAFAC class translation factor GTPase superfamily. Classic translation factor GTPase family. EF-G/EF-2 subfamily.

Its subcellular location is the cytoplasm. Its function is as follows. Catalyzes the GTP-dependent ribosomal translocation step during translation elongation. During this step, the ribosome changes from the pre-translocational (PRE) to the post-translocational (POST) state as the newly formed A-site-bound peptidyl-tRNA and P-site-bound deacylated tRNA move to the P and E sites, respectively. Catalyzes the coordinated movement of the two tRNA molecules, the mRNA and conformational changes in the ribosome. This chain is Elongation factor G (fusA), found in Thermus thermophilus (strain ATCC 27634 / DSM 579 / HB8).